A 273-amino-acid chain; its full sequence is Dermonecrotic toxin LhSicTox-alphaIA2avii (273 aa).

Histidine 5 is an active-site residue. Residues glutamate 25 and aspartate 27 each contribute to the Mg(2+) site. Histidine 41 (nucleophile) is an active-site residue. Cystine bridges form between cysteine 45–cysteine 51 and cysteine 47–cysteine 190. Aspartate 85 contributes to the Mg(2+) binding site.

The protein belongs to the arthropod phospholipase D family. Class II subfamily. The cofactor is Mg(2+). In terms of tissue distribution, expressed by the venom gland.

The protein resides in the secreted. The enzyme catalyses an N-(acyl)-sphingosylphosphocholine = an N-(acyl)-sphingosyl-1,3-cyclic phosphate + choline. It catalyses the reaction an N-(acyl)-sphingosylphosphoethanolamine = an N-(acyl)-sphingosyl-1,3-cyclic phosphate + ethanolamine. The catalysed reaction is a 1-acyl-sn-glycero-3-phosphocholine = a 1-acyl-sn-glycero-2,3-cyclic phosphate + choline. It carries out the reaction a 1-acyl-sn-glycero-3-phosphoethanolamine = a 1-acyl-sn-glycero-2,3-cyclic phosphate + ethanolamine. Functionally, dermonecrotic toxins cleave the phosphodiester linkage between the phosphate and headgroup of certain phospholipids (sphingolipid and lysolipid substrates), forming an alcohol (often choline) and a cyclic phosphate. This toxin acts on sphingomyelin (SM). It may also act on ceramide phosphoethanolamine (CPE), lysophosphatidylcholine (LPC) and lysophosphatidylethanolamine (LPE), but not on lysophosphatidylserine (LPS), and lysophosphatidylglycerol (LPG). It acts by transphosphatidylation, releasing exclusively cyclic phosphate products as second products. Induces dermonecrosis, hemolysis, increased vascular permeability, edema, inflammatory response, and platelet aggregation. This is Dermonecrotic toxin LhSicTox-alphaIA2avii from Loxosceles hirsuta (Recluse spider).